The chain runs to 476 residues: Adenosylhomocysteinase (476 aa).

Thr-67, Asp-142, and Glu-202 together coordinate substrate. 203-205 contacts NAD(+); that stretch reads TTT. 2 residues coordinate substrate: Lys-232 and Asp-236. NAD(+) is bound by residues Asn-237, 266 to 271, Glu-289, Asn-324, 345 to 347, and Asn-390; these read GYGDVG and IGH.

The protein belongs to the adenosylhomocysteinase family. NAD(+) is required as a cofactor.

The protein resides in the cytoplasm. It carries out the reaction S-adenosyl-L-homocysteine + H2O = L-homocysteine + adenosine. It participates in amino-acid biosynthesis; L-homocysteine biosynthesis; L-homocysteine from S-adenosyl-L-homocysteine: step 1/1. Its function is as follows. May play a key role in the regulation of the intracellular concentration of adenosylhomocysteine. This chain is Adenosylhomocysteinase, found in Synechococcus sp. (strain CC9311).